An 86-amino-acid chain; its full sequence is MSEQEDQEAPKQFTFGTVGFDARFPNTNQTKHCFQSYIDYFRCIKAKGEDFVPCKQFWHAYQSLCPMEWVERWDEQRENGTFPAPI.

Residues 30 to 73 enclose the CHCH domain; it reads TKHCFQSYIDYFRCIKAKGEDFVPCKQFWHAYQSLCPMEWVERW. Residues 33 to 43 carry the Cx9C motif motif; sequence CFQSYIDYFRC. 2 disulfides stabilise this stretch: C33–C65 and C43–C54. Residues 54-65 carry the Cx10C motif motif; the sequence is CKQFWHAYQSLC.

This sequence belongs to the cytochrome c oxidase subunit 6B family. Component of the cytochrome c oxidase (complex IV, CIV), a multisubunit enzyme composed of a catalytic core of 3 subunits and several supernumerary subunits. The complex exists as a monomer or a dimer and forms supercomplexes (SCs) in the inner mitochondrial membrane with ubiquinol-cytochrome c oxidoreductase (cytochrome b-c1 complex, complex III, CIII).

It localises to the mitochondrion inner membrane. Its pathway is energy metabolism; oxidative phosphorylation. Its function is as follows. Component of the cytochrome c oxidase, the last enzyme in the mitochondrial electron transport chain which drives oxidative phosphorylation. The respiratory chain contains 3 multisubunit complexes succinate dehydrogenase (complex II, CII), ubiquinol-cytochrome c oxidoreductase (cytochrome b-c1 complex, complex III, CIII) and cytochrome c oxidase (complex IV, CIV), that cooperate to transfer electrons derived from NADH and succinate to molecular oxygen, creating an electrochemical gradient over the inner membrane that drives transmembrane transport and the ATP synthase. Cytochrome c oxidase is the component of the respiratory chain that catalyzes the reduction of oxygen to water. Electrons originating from reduced cytochrome c in the intermembrane space (IMS) are transferred via the dinuclear copper A center (CU(A)) of subunit 2 and heme A of subunit 1 to the active site in subunit 1, a binuclear center (BNC) formed by heme A3 and copper B (CU(B)). The BNC reduces molecular oxygen to 2 water molecules using 4 electrons from cytochrome c in the IMS and 4 protons from the mitochondrial matrix. In Schizosaccharomyces pombe (strain 972 / ATCC 24843) (Fission yeast), this protein is Cytochrome c oxidase subunit 12, mitochondrial (cox12).